The following is a 644-amino-acid chain: Chaperone protein DnaK (644 aa).

Residue Thr199 is modified to Phosphothreonine; by autocatalysis. Residues 605-644 (KKSSEGQAAQGQTQSQESTKPVEEGVVDAEFEEVKEEDKK) are disordered. The segment covering 609–623 (EGQAAQGQTQSQEST) has biased composition (polar residues). The segment covering 629–644 (GVVDAEFEEVKEEDKK) has biased composition (acidic residues).

It belongs to the heat shock protein 70 family.

Functionally, acts as a chaperone. In Legionella pneumophila (strain Paris), this protein is Chaperone protein DnaK.